Consider the following 763-residue polypeptide: Photosystem I P700 chlorophyll a apoprotein A1 (763 aa).

The next 8 helical transmembrane spans lie at 72-95, 158-181, 197-221, 305-323, 360-383, 399-425, 447-469, and 544-562; these read IFSA…FHGA, LYVT…FHYH, LNHH…HVSL, TAHH…GHMY, WHAQ…HHMY, LSLF…IFMV, AIIS…LYIH, and FMVH…LILL. Residues C586 and C595 each coordinate [4Fe-4S] cluster. The next 2 membrane-spanning stretches (helical) occupy residues 602 to 623 and 677 to 699; these read HVFL…HYSW and TSAY…MFLF. H688 provides a ligand contact to chlorophyll a'. The chlorophyll a site is built by M696 and Y704. W705 is a phylloquinone binding site. A helical membrane pass occupies residues 737–757; that stretch reads AVGVAHYLLGGIVTTWSFFLA.

The protein belongs to the PsaA/PsaB family. As to quaternary structure, the PsaA/B heterodimer binds the P700 chlorophyll special pair and subsequent electron acceptors. PSI consists of a core antenna complex that captures photons, and an electron transfer chain that converts photonic excitation into a charge separation. The cyanobacterial PSI reaction center is composed of one copy each of PsaA,B,C,D,E,F,I,J,K,L,M and X, and forms trimeric complexes. Requires PSI electron transfer chain: 5 chlorophyll a, 1 chlorophyll a', 2 phylloquinones and 3 4Fe-4S clusters. PSI core antenna: 90 chlorophyll a, 22 carotenoids, 3 phospholipids and 1 galactolipid. P700 is a chlorophyll a/chlorophyll a' dimer, A0 is one or more chlorophyll a, A1 is one or both phylloquinones and FX is a shared 4Fe-4S iron-sulfur center. as cofactor.

The protein resides in the cellular thylakoid membrane. The catalysed reaction is reduced [plastocyanin] + hnu + oxidized [2Fe-2S]-[ferredoxin] = oxidized [plastocyanin] + reduced [2Fe-2S]-[ferredoxin]. Its function is as follows. PsaA and PsaB bind P700, the primary electron donor of photosystem I (PSI), as well as the electron acceptors A0, A1 and FX. PSI is a plastocyanin/cytochrome c6-ferredoxin oxidoreductase, converting photonic excitation into a charge separation, which transfers an electron from the donor P700 chlorophyll pair to the spectroscopically characterized acceptors A0, A1, FX, FA and FB in turn. Oxidized P700 is reduced on the lumenal side of the thylakoid membrane by plastocyanin or cytochrome c6. This is Photosystem I P700 chlorophyll a apoprotein A1 from Synechococcus elongatus (strain ATCC 33912 / PCC 7942 / FACHB-805) (Anacystis nidulans R2).